Here is a 398-residue protein sequence, read N- to C-terminus: Methionine import ATP-binding protein MetN 2 (398 aa).

The ABC transporter domain occupies valine 43–leucine 282. Residue glycine 79–serine 86 participates in ATP binding.

The protein belongs to the ABC transporter superfamily. Methionine importer (TC 3.A.1.24) family. In terms of assembly, the complex is composed of two ATP-binding proteins (MetN), two transmembrane proteins (MetI) and a solute-binding protein (MetQ).

It is found in the cell inner membrane. The catalysed reaction is L-methionine(out) + ATP + H2O = L-methionine(in) + ADP + phosphate + H(+). It carries out the reaction D-methionine(out) + ATP + H2O = D-methionine(in) + ADP + phosphate + H(+). Its function is as follows. Part of the ABC transporter complex MetNIQ involved in methionine import. Responsible for energy coupling to the transport system. The protein is Methionine import ATP-binding protein MetN 2 of Burkholderia lata (strain ATCC 17760 / DSM 23089 / LMG 22485 / NCIMB 9086 / R18194 / 383).